Consider the following 639-residue polypeptide: Ubiquitin-like modifier-activating enzyme ATG7 (639 aa).

The GXGXXG motif motif lies at 322–327; the sequence is GAGTLG. The Glycyl thioester intermediate role is filled by Cys-502.

Belongs to the ATG7 family. In terms of assembly, homodimer.

Its subcellular location is the cytoplasm. The protein resides in the preautophagosomal structure. Functionally, E1-like activating enzyme involved in the 2 ubiquitin-like systems required for cytoplasm to vacuole transport (Cvt) and autophagy. Activates ATG12 for its conjugation with ATG5 and ATG8 for its conjugation with phosphatidylethanolamine. Both systems are needed for the ATG8 association to Cvt vesicles and autophagosomes membranes. Autophagy is essential for maintenance of amino acid levels and protein synthesis under nitrogen starvation. Required for selective autophagic degradation of the nucleus (nucleophagy) as well as for mitophagy which contributes to regulate mitochondrial quantity and quality by eliminating the mitochondria to a basal level to fulfill cellular energy requirements and preventing excess ROS production. Plays a role in the regulation of filamentous growth and chronological longevity. In Candida albicans (strain SC5314 / ATCC MYA-2876) (Yeast), this protein is Ubiquitin-like modifier-activating enzyme ATG7 (APG7).